Consider the following 81-residue polypeptide: Exodeoxyribonuclease 7 small subunit (81 aa).

The protein belongs to the XseB family. As to quaternary structure, heterooligomer composed of large and small subunits.

The protein localises to the cytoplasm. The enzyme catalyses Exonucleolytic cleavage in either 5'- to 3'- or 3'- to 5'-direction to yield nucleoside 5'-phosphates.. Functionally, bidirectionally degrades single-stranded DNA into large acid-insoluble oligonucleotides, which are then degraded further into small acid-soluble oligonucleotides. The sequence is that of Exodeoxyribonuclease 7 small subunit from Ruegeria sp. (strain TM1040) (Silicibacter sp.).